The sequence spans 153 residues: Large ribosomal subunit protein uL30 (153 aa).

Belongs to the universal ribosomal protein uL30 family. In terms of assembly, part of the 50S ribosomal subunit.

In Methanoculleus marisnigri (strain ATCC 35101 / DSM 1498 / JR1), this protein is Large ribosomal subunit protein uL30.